Here is a 127-residue protein sequence, read N- to C-terminus: MSLLKEFKEFAMRGNVMDLAVAVVMGVAFNKIVTALVDGIIMPCVGLLLGGINIAGLSFTVGDVQIKWGNFLQNVIDFIIVAFAIFVLIKLINLLQRKKANEPEPVTPEIQLLTEIRDLLARNSSKI.

The next 3 helical transmembrane spans lie at 9–29 (EFAM…GVAF), 32–52 (IVTA…LGGI), and 75–95 (VIDF…INLL).

The protein belongs to the MscL family. As to quaternary structure, homopentamer.

Its subcellular location is the cell inner membrane. Its function is as follows. Channel that opens in response to stretch forces in the membrane lipid bilayer. May participate in the regulation of osmotic pressure changes within the cell. The protein is Large-conductance mechanosensitive channel of Legionella pneumophila subsp. pneumophila (strain Philadelphia 1 / ATCC 33152 / DSM 7513).